Here is a 75-residue protein sequence, read N- to C-terminus: Kappa-scoloptoxin(03)-Ssm1e (75 aa).

An N-terminal signal peptide occupies residues 1–23 (MKSSMAILLVMALIIFTLDKNYS).

The protein belongs to the scoloptoxin-03 family. Contains 3 disulfide bonds. As to expression, expressed by the venom gland.

Its subcellular location is the secreted. Its function is as follows. Inhibits voltage-gated potassium channels. The sequence is that of Kappa-scoloptoxin(03)-Ssm1e from Scolopendra mutilans (Chinese red-headed centipede).